The following is a 200-amino-acid chain: Large ribosomal subunit protein uL4 (200 aa).

Residues 38-75 (GRQGSKQQKNRSDVSGGGKRPWRQKGTGRARAGTSRGP) form a disordered region.

Belongs to the universal ribosomal protein uL4 family. As to quaternary structure, part of the 50S ribosomal subunit.

One of the primary rRNA binding proteins, this protein initially binds near the 5'-end of the 23S rRNA. It is important during the early stages of 50S assembly. It makes multiple contacts with different domains of the 23S rRNA in the assembled 50S subunit and ribosome. In terms of biological role, forms part of the polypeptide exit tunnel. The protein is Large ribosomal subunit protein uL4 of Azotobacter vinelandii (strain DJ / ATCC BAA-1303).